Consider the following 485-residue polypeptide: Mitochondria-eating protein (485 aa).

Residues 112–210 (TSHERELNEV…SILSSESSIL (99 aa)) adopt a coiled-coil conformation. Low complexity-rich tracts occupy residues 214 to 241 (LSRS…SPTS) and 471 to 485 (RSRS…TPRF). Disordered stretches follow at residues 214-244 (LSRS…SAKL) and 451-485 (RSRS…TPRF).

This sequence belongs to the MIEAP family.

It is found in the cytoplasm. Its subcellular location is the mitochondrion outer membrane. The protein localises to the mitochondrion matrix. In terms of biological role, key regulator of mitochondrial quality that mediates the repairing or degradation of unhealthy mitochondria in response to mitochondrial damage. Mediator of mitochondrial protein catabolic process (also named MALM) by mediating the degradation of damaged proteins inside mitochondria by promoting the accumulation in the mitochondrial matrix of hydrolases that are characteristic of the lysosomal lumen. Also involved in mitochondrion degradation of damaged mitochondria by promoting the formation of vacuole-like structures (named MIV), which engulf and degrade unhealthy mitochondria by accumulating lysosomes. Binds cardiolipin. May form molecular condensates (non-membrane-bounded organelles) within mitochondria that compartmentalize and promote cardiolipin metabolism. This is Mitochondria-eating protein (spata18) from Xenopus laevis (African clawed frog).